Reading from the N-terminus, the 1647-residue chain is MAP kinase-activating death domain protein (1647 aa).

Positions 14–268 (YLVIVGARHP…VPVSGQKRVD (255 aa)) constitute a uDENN domain. Residues 108 to 122 (EKGEGGAGSRGKEGT) are compositionally biased toward basic and acidic residues. Residues 108-168 (EKGEGGAGSR…GKRRAKAGSR (61 aa)) are disordered. Positions 128 to 141 (SEEGGTESSESGSS) are enriched in low complexity. Polar residues predominate over residues 142-157 (LQPLSADSTPDVNQSP). Ser-156 is subject to Phosphoserine. Residues 158–167 (RGKRRAKAGS) show a composition bias toward basic residues. The cDENN domain maps to 289 to 429 (RFTLVDFPLH…ESLELKKHLK (141 aa)). A dDENN domain is found at 431–565 (ALASMSLNTQ…LNPTNYAFQR (135 aa)). Disordered regions lie at residues 604–636 (ALSVPPERDSDSEPTDDSGSDSMDYDDSSSSYS) and 678–842 (NQKE…STEG). Over residues 615-630 (SEPTDDSGSDSMDYDD) the composition is skewed to acidic residues. 2 positions are modified to phosphoserine: Ser-689 and Ser-692. The span at 689-699 (SENSQENPPLR) shows a compositional bias: polar residues. Residues 700–712 (SSSSTTASSSPST) are compositionally biased toward low complexity. Positions 750–768 (NVDRRQAEIGEGSVRRRIY) are enriched in basic and acidic residues. Residues 790-804 (ESYTPRFSQHVSGNR) show a composition bias toward polar residues. 3 positions are modified to phosphoserine: Ser-813, Ser-818, and Ser-820. Low complexity predominate over residues 827–840 (RASSPNSTVSNTST). 5 positions are modified to phosphoserine: Ser-858, Ser-862, Ser-916, Ser-921, and Ser-930. Disordered regions lie at residues 913 to 941 (QKSSVIKHSPTVKREPPSPQGRSSNSSEN), 1051 to 1110 (KEPD…DTRS), and 1146 to 1243 (VFDL…DSEI). Polar residues predominate over residues 932–941 (QGRSSNSSEN). At Ser-1059 the chain carries Phosphoserine. Thr-1061 and Thr-1066 each carry phosphothreonine. Ser-1110 carries the phosphoserine modification. Polar residues-rich tracts occupy residues 1158–1173 (QISADSGVSLTSSSQR), 1189–1207 (RSSSQDSEVSTVVSNSSGE), and 1234–1243 (SRGTLSDSEI). The residue at position 1237 (Thr-1237) is a Phosphothreonine. Residues Ser-1239 and Ser-1270 each carry the phosphoserine modification. A Death domain is found at 1340 to 1415 (GMDQGPQEMI…GLVYSQQINE (76 aa)).

The protein belongs to the MADD family. Interacts (via death domain) with TNFRSF1A (via death domain). Interacts with PIDD1. Interacts with YWHAZ. Interacts (via death domain) with KIF1B; links the motor KIF1B to Rab3-carrying vesicles in anterograde synaptic vesicle transport. Interacts with KIF1A. Interacts (via uDENN domain) with RAB3A, RAB3B, RAB3C and RAB3D; the GTP-bound form of the Rab proteins is preferred for interaction. Expressed in testis, ovary, brain and heart. Expressed in spleen, thymus, prostate, testis, ovary, small instestine and colon. Expressed in liver. As to expression, not detected in the brain, breast, kidney, lung, ovary, pancreas, testis, uterus, stomach and thyroid. In terms of tissue distribution, expressed in the brain, breast, kidney, lung, ovary, pancreas, testis, uterus, stomach and thyroid.

It localises to the cell membrane. Its subcellular location is the cytoplasm. The protein localises to the cell projection. It is found in the axon. Its function is as follows. Guanyl-nucleotide exchange factor that regulates small GTPases of the Rab family. Converts GDP-bound inactive form of RAB27A and RAB27B to the GTP-bound active forms. Converts GDP-bound inactive form of RAB3A, RAB3C and RAB3D to the GTP-bound active forms, GTPases involved in synaptic vesicle exocytosis and vesicle secretion. Plays a role in synaptic vesicle formation and in vesicle trafficking at the neuromuscular junction. Involved in up-regulating a post-docking step of synaptic exocytosis in central synapses. Probably by binding to the motor proteins KIF1B and KIF1A, mediates motor-dependent transport of GTP-RAB3A-positive vesicles to the presynaptic nerve terminals. Plays a role in TNFA-mediated activation of the MAPK pathway, including ERK1/2. May link TNFRSF1A with MAP kinase activation. May be involved in the regulation of TNFA-induced apoptosis. The protein is MAP kinase-activating death domain protein of Homo sapiens (Human).